The sequence spans 122 residues: UPF0145 protein BamMC406_5002 (122 aa).

This sequence belongs to the UPF0145 family.

The protein is UPF0145 protein BamMC406_5002 of Burkholderia ambifaria (strain MC40-6).